The chain runs to 446 residues: Na(+)-translocating NADH-quinone reductase subunit A (446 aa).

It belongs to the NqrA family. Composed of six subunits; NqrA, NqrB, NqrC, NqrD, NqrE and NqrF.

It catalyses the reaction a ubiquinone + n Na(+)(in) + NADH + H(+) = a ubiquinol + n Na(+)(out) + NAD(+). NQR complex catalyzes the reduction of ubiquinone-1 to ubiquinol by two successive reactions, coupled with the transport of Na(+) ions from the cytoplasm to the periplasm. NqrA to NqrE are probably involved in the second step, the conversion of ubisemiquinone to ubiquinol. The chain is Na(+)-translocating NADH-quinone reductase subunit A from Aliivibrio salmonicida (strain LFI1238) (Vibrio salmonicida (strain LFI1238)).